Here is a 466-residue protein sequence, read N- to C-terminus: FAD-dependent monooxygenase dpfgE (466 aa).

The signal sequence occupies residues 1–23 (MSQKPFRVIIVGGSVTGLTLAHS). FAD-binding residues include glutamate 35, glycine 49, and arginine 108. N-linked (GlcNAc...) asparagine glycosylation is found at asparagine 128 and asparagine 192. 2 residues coordinate FAD: aspartate 312 and alanine 325. Asparagine 376 is a glycosylation site (N-linked (GlcNAc...) asparagine). The chain crosses the membrane as a helical span at residues 443–465 (GVVRNVFFLLAATVIVAWVCRLW).

The protein belongs to the paxM FAD-dependent monooxygenase family. It depends on FAD as a cofactor.

Its subcellular location is the membrane. The protein operates within secondary metabolite biosynthesis; terpenoid biosynthesis. Functionally, FAD-dependent monooxygenase; part of the gene cluster that mediates the biosynthesis of diterpenoid pyrones. The first step of the pathway is the synthesis of the alpha-pyrone moiety by the polyketide synthase dpfgA via condensation of one acetyl-CoA starter unit with 3 malonyl-CoA units and 2 methylations. The alpha-pyrone is then combined with geranylgeranyl pyrophosphate (GGPP) formed by the GGPP synthase dpfgD through the action of the prenyltransferase dpfgC to yield a linear alpha-pyrone diterpenoid. Subsequent steps in the diterpenoid pyrone biosynthetic pathway involve the decalin core formation, which is initiated by the epoxidation of the C10-C11 olefin by the FAD-dependent oxidoreductase dpfgE, and is followed by a cyclization cascade catalyzed by the terpene cyclase dpfgB. The short chain dehydrogenase/reductase dpfgG then oxidizes the 8S hydroxy group to a ketone and the short chain dehydrogenase/reductase dpfgH reduces the ketone to the 8R hydroxy group to yield higginsianin B. Higginsianin B is further methylated by the methyltransferase dpfgI to produce the intermediate named FDDP B. The cytochrome P450 monooxygenase dfgpJ then catalyzes a three-step oxidation at C-27 to generate a carboxylic acid as well as C-26 hydroxylation. Finally, methyltransferase dpfgK methylates the carboxylic acid generated by dpfgJ, yielding the final diterpenoid pyrones from the pathway which were named FDDP D and FDDP E. The protein is FAD-dependent monooxygenase dpfgE of Gibberella zeae (strain ATCC MYA-4620 / CBS 123657 / FGSC 9075 / NRRL 31084 / PH-1) (Wheat head blight fungus).